Reading from the N-terminus, the 575-residue chain is Developmental and secondary metabolism regulator VEL1 (575 aa).

Residues 21 to 225 form the Velvet domain; the sequence is GRKLKYTLTV…AEQGCRVRIR (205 aa). Residues 35–40 carry the Nuclear localization signal motif; sequence ERARAC. Disordered stretches follow at residues 36 to 56 and 227 to 402; these read RARA…VDPP and DVRM…QSYE. Residues 274-284 show a composition bias toward basic and acidic residues; that stretch reads VHEDPQQRRGS. Positions 294–308 are enriched in polar residues; the sequence is VVNTPFRTPSISPST. Residues 334-346 are compositionally biased toward pro residues; it reads IQPPHPPPPPPSS. Composition is skewed to polar residues over residues 355-365 and 385-402; these read HHNQGPSTQFR and SYSQ…QSYE. The interval 465–509 is PEST; sequence AEQPLAMSPLASVTSISRGTQNSAPMPSHNYNKLERSGSYSQYAP. A disordered region spans residues 513 to 549; that stretch reads EAPKSTNKRSFNDVFSTPTESLSNGRRPSAIGIDIEE. The span at 516–538 shows a compositional bias: polar residues; sequence KSTNKRSFNDVFSTPTESLSNGR.

It belongs to the velvet family. VeA subfamily. In terms of assembly, component of the heterotrimeric velvet complex composed of LAE1, VEL1 and VEL2; VEL1 acting as a bridging protein between LAE1 and VEL2.

The protein resides in the nucleus. The protein localises to the cytoplasm. Its function is as follows. Component of the velvet transcription factor complex that controls sexual/asexual developmental ratio in response to light, promoting sexual development in the darkness while stimulating asexual sporulation under illumination. The velvet complex hat acts as a global regulator for secondary metabolite gene expression. Controls the expression of the oxalic acid and melanin gene clusters. Also controls the expression of proteases and carbohydrate-active enzymes. Involved in the resistance to oxidative stress. Required for full virulence. This Botryotinia fuckeliana (strain B05.10) (Noble rot fungus) protein is Developmental and secondary metabolism regulator VEL1.